The following is a 263-amino-acid chain: Small ribosomal subunit protein eS4, Y isoform 2 (263 aa).

An S4 RNA-binding domain is found at 42-104; it reads LPLIVFLRNR…TGEHFRLVYD (63 aa).

The protein belongs to the eukaryotic ribosomal protein eS4 family.

This is Small ribosomal subunit protein eS4, Y isoform 2 (RPS4Y2) from Pan troglodytes (Chimpanzee).